A 254-amino-acid polypeptide reads, in one-letter code: Ankyrin repeat domain-containing protein 7 (254 aa).

ANK repeat units follow at residues 58–87 (KYRT…KINV), 91–120 (ENKS…DPDL), 124–153 (RYNT…DLEA), 157–186 (DGYT…DVNA), and 190–219 (YQRT…ELCY).

In terms of tissue distribution, testis specific.

The protein is Ankyrin repeat domain-containing protein 7 (ANKRD7) of Homo sapiens (Human).